The primary structure comprises 469 residues: Adenosylhomocysteinase (469 aa).

Substrate-binding residues include threonine 63, aspartate 139, and glutamate 164. 165–167 (TTT) lines the NAD(+) pocket. Substrate is bound by residues lysine 194 and aspartate 198. NAD(+) is bound by residues asparagine 199, 228-233 (GYGDVG), glutamate 251, asparagine 300, 321-323 (IGH), and asparagine 375.

The protein belongs to the adenosylhomocysteinase family. NAD(+) serves as cofactor.

The protein resides in the cytoplasm. It catalyses the reaction S-adenosyl-L-homocysteine + H2O = L-homocysteine + adenosine. It participates in amino-acid biosynthesis; L-homocysteine biosynthesis; L-homocysteine from S-adenosyl-L-homocysteine: step 1/1. Its function is as follows. May play a key role in the regulation of the intracellular concentration of adenosylhomocysteine. In Pseudomonas fluorescens (strain ATCC BAA-477 / NRRL B-23932 / Pf-5), this protein is Adenosylhomocysteinase.